A 122-amino-acid polypeptide reads, in one-letter code: Serum amyloid A-3 protein (122 aa).

The first 18 residues, 1–18, serve as a signal peptide directing secretion; that stretch reads MKPSIAIILCILILGVDS. Residues 87 to 122 form a disordered region; the sequence is TGHGAEDSRADQFANEWGRSGKDPNHFRPAGLPKRY.

Belongs to the SAA family. In terms of tissue distribution, found in various tissues.

Its subcellular location is the secreted. Its function is as follows. Major acute phase reactant. Apolipoprotein of the HDL complex. In vitro exhibits antimicrobial activity against Escherichia coli, Streptococcus uberis and Pseudomonas aeruginosa. This Mus musculus (Mouse) protein is Serum amyloid A-3 protein (Saa3).